Here is a 222-residue protein sequence, read N- to C-terminus: Putative N-acetylmannosamine-6-phosphate 2-epimerase (222 aa).

The protein belongs to the NanE family.

The enzyme catalyses an N-acyl-D-glucosamine 6-phosphate = an N-acyl-D-mannosamine 6-phosphate. It participates in amino-sugar metabolism; N-acetylneuraminate degradation; D-fructose 6-phosphate from N-acetylneuraminate: step 3/5. Its function is as follows. Converts N-acetylmannosamine-6-phosphate (ManNAc-6-P) to N-acetylglucosamine-6-phosphate (GlcNAc-6-P). This chain is Putative N-acetylmannosamine-6-phosphate 2-epimerase, found in Staphylococcus saprophyticus subsp. saprophyticus (strain ATCC 15305 / DSM 20229 / NCIMB 8711 / NCTC 7292 / S-41).